A 283-amino-acid polypeptide reads, in one-letter code: Daunorubicin resistance ABC transporter permease protein DrrB1 (283 aa).

The region spanning 53–280 is the ABC transmembrane type-2 domain; that stretch reads VQLIDIVLMP…PLTMRLYRNK (228 aa). 6 consecutive transmembrane segments (helical) span residues 58-78, 85-105, 150-170, 171-191, 198-218, and 252-272; these read IVLM…GAFA, LQFY…VYTG, VFLG…VVGA, MLVL…LGVV, VSGT…IFVM, and FWDV…FAPL.

It belongs to the ABC-2 integral membrane protein family. In terms of assembly, the complex is probably composed of two ATP-binding proteins (DrrA1) and two transmembrane proteins (DrrB1).

The protein localises to the cell membrane. In terms of biological role, part of the ABC transporter complex DrrA1B1 involved in daunorubicin efflux. Responsible for the translocation of the substrate across the membrane. Confers self-resistance to daunorubicin, an antibiotic produced by S.coeruleorubidus. In Streptomyces coeruleorubidus, this protein is Daunorubicin resistance ABC transporter permease protein DrrB1.